Here is a 398-residue protein sequence, read N- to C-terminus: Phosphoglycerate kinase (398 aa).

Substrate-binding positions include 21-23, Arg36, 59-62, Arg119, and Arg157; these read DFN and HLGR. Residues Lys208, Gly296, Glu327, and 354–357 contribute to the ATP site; that span reads GGDS.

It belongs to the phosphoglycerate kinase family. In terms of assembly, monomer.

It localises to the cytoplasm. The catalysed reaction is (2R)-3-phosphoglycerate + ATP = (2R)-3-phospho-glyceroyl phosphate + ADP. Its pathway is carbohydrate degradation; glycolysis; pyruvate from D-glyceraldehyde 3-phosphate: step 2/5. The polypeptide is Phosphoglycerate kinase (Streptococcus pneumoniae serotype 2 (strain D39 / NCTC 7466)).